The chain runs to 156 residues: MSRRNAAEKRPILPDPQFNSRLATMMVVRLMQHGKKSTAQRILSDAFGLINERTGGDPLELFETAVKNATPLVEVRARRVGGATYQVPMEVRQERGTAMALRWLVSFSRARNGRSMAQKLAGELMDAANEAGNAVRKREETHKMAEANKAFAHYRY.

This sequence belongs to the universal ribosomal protein uS7 family. As to quaternary structure, part of the 30S ribosomal subunit. Contacts proteins S9 and S11.

One of the primary rRNA binding proteins, it binds directly to 16S rRNA where it nucleates assembly of the head domain of the 30S subunit. Is located at the subunit interface close to the decoding center, probably blocks exit of the E-site tRNA. This Synechococcus sp. (strain CC9605) protein is Small ribosomal subunit protein uS7.